The primary structure comprises 128 residues: L-ectoine synthase (128 aa).

This sequence belongs to the ectoine synthase family.

It carries out the reaction (2S)-4-acetamido-2-aminobutanoate = L-ectoine + H2O. The protein operates within amine and polyamine biosynthesis; ectoine biosynthesis; L-ectoine from L-aspartate 4-semialdehyde: step 3/3. Functionally, catalyzes the circularization of gamma-N-acetyl-alpha,gamma-diaminobutyric acid (ADABA) to ectoine (1,4,5,6-tetrahydro-2-methyl-4-pyrimidine carboxylic acid), which is an excellent osmoprotectant. The polypeptide is L-ectoine synthase (Vibrio atlanticus (strain LGP32) (Vibrio splendidus (strain Mel32))).